The chain runs to 663 residues: LEAF RUST 10 DISEASE-RESISTANCE LOCUS RECEPTOR-LIKE PROTEIN KINASE-like 1.4 (663 aa).

Residues 1 to 25 (MYYPLSSSLMFFILFSLFYHLPCES) form the signal peptide. Topologically, residues 26 to 241 (SKCESLFQCG…TSLSIGAKAG (216 aa)) are extracellular. 5 N-linked (GlcNAc...) asparagine glycosylation sites follow: asparagine 36, asparagine 64, asparagine 106, asparagine 137, and asparagine 208. A helical membrane pass occupies residues 242–262 (IAVASVSGLAILLLAGLFLCI). At 263–663 (RRRRKTQDAQ…TSSSDTAASL (401 aa)) the chain is on the cytoplasmic side. The interval 282 to 304 (SYSSRDTSRNPTSTTISSSSNHS) is disordered. Positions 290-304 (RNPTSTTISSSSNHS) are enriched in low complexity. A Protein kinase domain is found at 334–609 (ENFSRELGDG…DEIVEILRGI (276 aa)). ATP is bound by residues 340–348 (LGDGGFGTV) and lysine 362. The Proton acceptor role is filled by aspartate 458. The segment at 637–663 (LLRNSVPPPISPETDKWTSSSDTAASL) is disordered. Over residues 653–663 (WTSSSDTAASL) the composition is skewed to polar residues.

This sequence belongs to the protein kinase superfamily. Ser/Thr protein kinase family.

It is found in the cell membrane. The enzyme catalyses L-seryl-[protein] + ATP = O-phospho-L-seryl-[protein] + ADP + H(+). The catalysed reaction is L-threonyl-[protein] + ATP = O-phospho-L-threonyl-[protein] + ADP + H(+). In Arabidopsis thaliana (Mouse-ear cress), this protein is LEAF RUST 10 DISEASE-RESISTANCE LOCUS RECEPTOR-LIKE PROTEIN KINASE-like 1.4.